Reading from the N-terminus, the 91-residue chain is Small ribosomal subunit protein uS19 (91 aa).

It belongs to the universal ribosomal protein uS19 family.

Its function is as follows. Protein S19 forms a complex with S13 that binds strongly to the 16S ribosomal RNA. In Synechococcus sp. (strain CC9311), this protein is Small ribosomal subunit protein uS19.